The sequence spans 183 residues: Mid1-interacting protein 1 (183 aa).

N-acetylmethionine is present on M1. Residues S75 and S79 each carry the phosphoserine modification.

Belongs to the SPOT14 family. As to quaternary structure, homodimer in the absence of THRSP. Heterodimer with THRSP. The homodimer interacts with ACACA and ACACB. Promotes polymerization of Acetyl-CoA carboxylase to form complexes that contain MID1IP1 and ACACA and/or ACACB. Interaction with THRSP interferes with ACACA binding.

Its subcellular location is the nucleus. The protein resides in the cytoplasm. It is found in the cytoskeleton. In terms of biological role, plays a role in the regulation of lipogenesis in liver. Up-regulates ACACA enzyme activity. Required for efficient lipid biosynthesis, including triacylglycerol, diacylglycerol and phospholipid. Involved in stabilization of microtubules. This chain is Mid1-interacting protein 1 (MID1IP1), found in Homo sapiens (Human).